Reading from the N-terminus, the 355-residue chain is Peptide chain release factor 1 (355 aa).

Q231 carries the N5-methylglutamine modification. Positions 283-292 are enriched in basic and acidic residues; that stretch reads LAKETSERKS. Residues 283–306 are disordered; the sequence is LAKETSERKSQVGTGDRSGRIRTY.

It belongs to the prokaryotic/mitochondrial release factor family. Post-translationally, methylated by PrmC. Methylation increases the termination efficiency of RF1.

It localises to the cytoplasm. In terms of biological role, peptide chain release factor 1 directs the termination of translation in response to the peptide chain termination codons UAG and UAA. This Campylobacter concisus (strain 13826) protein is Peptide chain release factor 1.